The sequence spans 600 residues: Cytidine monophosphate-N-acetylneuraminic acid hydroxylase (600 aa).

A Rieske domain is found at 9-107 (LSPVEVASLK…VEMDENNRLL (99 aa)). [2Fe-2S] cluster is bound by residues Cys49, His51, Cys70, and His73.

This sequence belongs to the CMP-Neu5Ac hydroxylase family. Requires [2Fe-2S] cluster as cofactor.

The protein localises to the cytoplasm. It carries out the reaction CMP-N-acetyl-beta-neuraminate + 2 Fe(II)-[cytochrome b5] + O2 + 2 H(+) = CMP-N-glycoloyl-beta-neuraminate + 2 Fe(III)-[cytochrome b5] + H2O. It functions in the pathway amino-sugar metabolism; N-acetylneuraminate metabolism. Sialic acids are components of carbohydrate chains of glycoconjugates and are involved in cell-cell recognition and cell-pathogen interactions. Catalyzes the conversion of CMP-N-acetylneuraminic acid (CMP-Neu5Ac) into its hydroxylated derivative CMP-N-glycolylneuraminic acid (CMP-Neu5Gc), a sialic acid abundantly expressed at the surface of many cells. In Pan paniscus (Pygmy chimpanzee), this protein is Cytidine monophosphate-N-acetylneuraminic acid hydroxylase (CMAH).